The following is a 144-amino-acid chain: Actin-associated protein FAM107A (144 aa).

Residues 66-112 (ELQRVLEHRRRNQLIKKKKEELEAKRLQCPFEQELLRRQQRLNQLEK) are a coiled coil. The short motif at 74–84 (RRRNQLIKKKK) is the Nuclear localization signal element. The interval 105–124 (QRLNQLEKPPEKEEDHAPEF) is disordered. The segment covering 112–124 (KPPEKEEDHAPEF) has biased composition (basic and acidic residues).

This sequence belongs to the FAM107 family. Interacts with ACTB. Interacts with COMMD1; this interaction stabilizes COMMD1 in the nucleus. Interacts with MAP1A. Interacts with PRDX1. Interacts with F-actin. As to expression, widely expressed. Expressed in neurons. Expressed in malignant glial tumors. Expression is reduced or absent in a number of cancer cell lines.

The protein localises to the nucleus. It is found in the cytoplasm. Its subcellular location is the cytoskeleton. It localises to the stress fiber. The protein resides in the cell junction. The protein localises to the focal adhesion. It is found in the cell projection. Its subcellular location is the ruffle membrane. It localises to the synapse. In terms of biological role, stress-inducible actin-binding protein that plays a role in synaptic and cognitive functions by modulating actin filamentous (F-actin) dynamics. Mediates polymerization of globular actin to F-actin. Also binds to, stabilizes and bundles F-actin. Involved in synaptic function by regulating neurite outgrowth in an actin-dependent manner and for the acquisition of hippocampus-dependent cognitive function, such as learning and long-term memory. Plays a role in the actin and microtubule cytoskeleton organization; negatively regulates focal adhesion (FA) assembly promoting malignant glial cell migration in an actin-, microtubule- and MAP1A-dependent manner. Also involved in neuroblastoma G1/S phase cell cycle progression and cell proliferation inhibition by stimulating ubiquitination of NF-kappa-B subunit RELA and NF-kappa-B degradation in a COMMD1- and actin-dependent manner. May play a role in tumor development. In Homo sapiens (Human), this protein is Actin-associated protein FAM107A.